The sequence spans 307 residues: MGLSISFLSIIMMMCLLFPDLNVVVKSATTEYTTLIYKGCARQQFSDPSGLYSQALSAMFGSLVSQSTKTRFYKTTTGTSTTTITGLFQCRGDLSNHDCYNCVSRLPVLSDKLCGKTIASRVQLSGCYLLYEVSGFSQISGMEMLFKTCGKNNIAGTGFEERRDTAFGVMQNGVVSGHGFYATTYESVYVLGQCEGDVGDTDCSGCVKNALEKAQVECGSSISGQIYLHKCFIAYSYYPNGVPRRSSSSSSSSSSSSSGSSNSDPSTSTGATGKTVAIIVGGAAGVGFLVICLLFAKNLMRKKHDDY.

The signal sequence occupies residues 1–23 (MGLSISFLSIIMMMCLLFPDLNV). Over 24–275 (VVKSATTEYT…STSTGATGKT (252 aa)) the chain is Extracellular. 2 Gnk2-homologous domains span residues 33 to 136 (TTLI…VSGF) and 141 to 240 (GMEM…YYPN). Intrachain disulfides connect C40/C114, C90/C99, C102/C127, C149/C218, C194/C203, and C206/C231. Residues 246 to 268 (SSSSSSSSSSSSSGSSNSDPSTS) show a composition bias toward low complexity. The segment at 246–270 (SSSSSSSSSSSSSGSSNSDPSTSTG) is disordered. The chain crosses the membrane as a helical span at residues 276 to 296 (VAIIVGGAAGVGFLVICLLFA). The interval 276 to 296 (VAIIVGGAAGVGFLVICLLFA) is necessary and sufficient for plasmodesmal targeting. The Cytoplasmic portion of the chain corresponds to 297-307 (KNLMRKKHDDY).

This sequence belongs to the cysteine-rich repeat secretory protein family. Plasmodesmata-located proteins (PDLD) subfamily. (Microbial infection) Interacts with Grapevine fanleaf virus (GFLV) 2B-MP. In terms of tissue distribution, highly expressed in inflorescence shoot apex. Uniformly expressed within the inflorescence meristem with the exception of a boundary zone between floral primordia and the meristem where the expression is weaker (at protein level).

It localises to the cell membrane. Its subcellular location is the cell junction. It is found in the plasmodesma. Modulates cell-to-cell trafficking. The sequence is that of Plasmodesmata-located protein 2 from Arabidopsis thaliana (Mouse-ear cress).